A 344-amino-acid chain; its full sequence is Phenylalanine--tRNA ligase alpha subunit (344 aa).

Residue Glu-258 participates in Mg(2+) binding.

It belongs to the class-II aminoacyl-tRNA synthetase family. Phe-tRNA synthetase alpha subunit type 1 subfamily. Tetramer of two alpha and two beta subunits. Requires Mg(2+) as cofactor.

Its subcellular location is the cytoplasm. It catalyses the reaction tRNA(Phe) + L-phenylalanine + ATP = L-phenylalanyl-tRNA(Phe) + AMP + diphosphate + H(+). This is Phenylalanine--tRNA ligase alpha subunit from Thiobacillus denitrificans (strain ATCC 25259 / T1).